A 398-amino-acid chain; its full sequence is MRLREPLLSGSAAMPGASLQRACRLLVAVCALHLGVTLVYYLAGRDLSRLPQLVGVSTPLQGGSNSAAAIGQSSGELRTGGARPPPPLGASSQPRPGGDSSPVVDSGPGPASNLTSVPVPHTTALSLPACPEESPLLVGPMLIEFNMPVDLELVAKQNPNVKMGGRYAPRDCVSPHKVAIIIPFRNRQEHLKYWLYYLHPVLQRQQLDYGIYVINQAGDTIFNRAKLLNVGFQEALKDYDYTCFVFSDVDLIPMNDHNAYRCFSQPRHISVAMDKFGFSLPYVQYFGGVSALSKQQFLTINGFPNNYWGWGGEDDDIFNRLVFRGMSISRPNAVVGRCRMIRHSRDKKNEPNPQRFDRIAHTKETMLSDGLNSLTYQVLDVQRYPLYTQITVDIGTPS.

At 1-24 (MRLREPLLSGSAAMPGASLQRACR) the chain is on the cytoplasmic side. The helical; Signal-anchor for type II membrane protein transmembrane segment at 25–44 (LLVAVCALHLGVTLVYYLAG) threads the bilayer. The Lumenal segment spans residues 45-398 (RDLSRLPQLV…QITVDIGTPS (354 aa)). Residues 61–76 (QGGSNSAAAIGQSSGE) are compositionally biased toward polar residues. A disordered region spans residues 61 to 117 (QGGSNSAAAIGQSSGELRTGGARPPPPLGASSQPRPGGDSSPVVDSGPGPASNLTSV). Asn113 carries an N-linked (GlcNAc...) asparagine glycan. An intrachain disulfide couples Cys130 to Cys172. UDP-alpha-D-galactose is bound by residues 183-187 (PFRNR), 222-224 (FNR), 249-250 (VD), and Trp310. Residues Cys243 and Cys262 are joined by a disulfide bond. Asp250 provides a ligand contact to Mn(2+). Residue 312–315 (GEDD) coordinates N-acetyl-D-glucosamine. His343 serves as a coordination point for Mn(2+). 343–346 (HSRD) provides a ligand contact to UDP-alpha-D-galactose. An N-acetyl-D-glucosamine-binding site is contributed by Arg355.

This sequence belongs to the glycosyltransferase 7 family. Homodimer; and heterodimer with alpha-lactalbumin to form lactose synthase. Interacts (via N-terminal cytoplasmic domain) with UBE2Q1 (via N-terminus); the interaction is direct. It depends on Mn(2+) as a cofactor. In terms of processing, the soluble form derives from the membrane forms by proteolytic processing. As to expression, ubiquitously expressed, but at very low levels in fetal and adult brain.

The protein resides in the golgi apparatus. Its subcellular location is the golgi stack membrane. It is found in the cell membrane. The protein localises to the cell surface. It localises to the cell projection. The protein resides in the filopodium. Its subcellular location is the secreted. The catalysed reaction is D-glucose + UDP-alpha-D-galactose = lactose + UDP + H(+). The enzyme catalyses an N-acetyl-beta-D-glucosaminyl derivative + UDP-alpha-D-galactose = a beta-D-galactosyl-(1-&gt;4)-N-acetyl-beta-D-glucosaminyl derivative + UDP + H(+). It catalyses the reaction N-acetyl-D-glucosamine + UDP-alpha-D-galactose = beta-D-galactosyl-(1-&gt;4)-N-acetyl-D-glucosamine + UDP + H(+). It carries out the reaction a beta-D-GlcNAc-(1-&gt;3)-beta-D-Gal-(1-&gt;4)-beta-D-Glc-(1&lt;-&gt;1)-Cer(d18:1(4E)) + UDP-alpha-D-galactose = a neolactoside nLc4Cer(d18:1(4E)) + UDP + H(+). The catalysed reaction is a beta-D-glucosylceramide + UDP-alpha-D-galactose = a beta-D-galactosyl-(1-&gt;4)-beta-D-glucosyl-(1&lt;-&gt;1)-ceramide + UDP + H(+). The enzyme catalyses a neolactoside IV(3)-beta-GlcNAc-nLc4Cer + UDP-alpha-D-galactose = a neolactoside nLc6Cer + UDP + H(+). It functions in the pathway protein modification; protein glycosylation. In terms of biological role, the Golgi complex form catalyzes the production of lactose in the lactating mammary gland and could also be responsible for the synthesis of complex-type N-linked oligosaccharides in many glycoproteins as well as the carbohydrate moieties of glycolipids. The cell surface form functions as a recognition molecule during a variety of cell to cell and cell to matrix interactions, as those occurring during development and egg fertilization, by binding to specific oligosaccharide ligands on opposing cells or in the extracellular matrix. In Homo sapiens (Human), this protein is Beta-1,4-galactosyltransferase 1.